A 658-amino-acid polypeptide reads, in one-letter code: MSNTVSLQFPDGSVREYDASMTGAALAESISKSLAKKAVAYAVDGTVRDLSDPLGASGKVEIITREDPRALELIRHDTAHVLAEAVQELFPGTQVTIGPVIENGFYYDFARNEPFTLDDLPVIEKKMREIIQRNKPFTKEVWSREKAKQVFSDKGESYKVELVDAIPAGQDLKIYYQGDWFDLCRGPHMASTGQIGNSFKLMKVAGAYWRGDANNPMLTRIYGTAFANDNDLQAYLHMLEEAEKRDHRRLGREMDLFHFQEEGPGVVFWHAKGWKMFQNLVSYMRRRLDSHGYQEVNAPQVLDKSLWETSGHWGWYRDNMFKVTVAGDDTDDDRVFALKPMNCPGHVQIFKHGLKSYRDLPIKLAEFGNVHRYEPSGALHGLMRVRGFTQDDAHIFCTEEQMAAECLRINDLILSVYKDFGFEEITIKLSTRPEKRVGSDELWDRAESVMMTVLEQIRQQSNNIKTGILPGEGAFYGPKFEYTLKDAIGREWQCGTTQVDFNLPERFGAFYIGADSEKKQPVMIHRAICGSMERFLGILIENFAGHMPLWFAPVQVVVATITSDADEYAKEAAAKLKAAGLQVVTDLRNEKINYKVREHSLQKVPVILVCGKREAEEKTVNMRRLGSRDQESMTLDEAIARLCEEATPPDLLRLKNAG.

Positions methionine 1 to threonine 64 constitute a TGS domain. Residues aspartate 246 to proline 548 are catalytic. Zn(2+) is bound by residues cysteine 343, histidine 394, and histidine 525.

It belongs to the class-II aminoacyl-tRNA synthetase family. As to quaternary structure, homodimer. Requires Zn(2+) as cofactor.

It localises to the cytoplasm. The catalysed reaction is tRNA(Thr) + L-threonine + ATP = L-threonyl-tRNA(Thr) + AMP + diphosphate + H(+). Its function is as follows. Catalyzes the attachment of threonine to tRNA(Thr) in a two-step reaction: L-threonine is first activated by ATP to form Thr-AMP and then transferred to the acceptor end of tRNA(Thr). Also edits incorrectly charged L-seryl-tRNA(Thr). In Brucella canis (strain ATCC 23365 / NCTC 10854 / RM-666), this protein is Threonine--tRNA ligase.